The chain runs to 262 residues: Type III pantothenate kinase (262 aa).

Aspartate 9 to lysine 16 contributes to the ATP binding site. Residues tyrosine 103 and glycine 110–arginine 113 contribute to the substrate site. The active-site Proton acceptor is aspartate 112. Residue aspartate 134 coordinates K(+). Residue threonine 137 coordinates ATP. Threonine 190 contributes to the substrate binding site.

It belongs to the type III pantothenate kinase family. Homodimer. NH4(+) is required as a cofactor. K(+) serves as cofactor.

It localises to the cytoplasm. It carries out the reaction (R)-pantothenate + ATP = (R)-4'-phosphopantothenate + ADP + H(+). It functions in the pathway cofactor biosynthesis; coenzyme A biosynthesis; CoA from (R)-pantothenate: step 1/5. Catalyzes the phosphorylation of pantothenate (Pan), the first step in CoA biosynthesis. The protein is Type III pantothenate kinase of Nitratidesulfovibrio vulgaris (strain DSM 19637 / Miyazaki F) (Desulfovibrio vulgaris).